The chain runs to 437 residues: MGNLVAIVGRPNVGKSTLFNRLTKTRQAIVNDEAGTTRDRQYGKSEWLGREFSVVDTGGWVVNSDDIFEEEIRKQVLMAVDEADVILFVVDVTNGVTDLDMQVAAILRRAKSPVIMVANKTDNHELRYNAPEFYRLGLGDPYCISAISGSGTGDLMDLIVSKFKKESDEILDEDIPRFAVVGRPNAGKSSIVNAFIGEERNIVTEIAGTTRDSIYTRYNKFGFDFYLVDTAGIRKKNKVNEDLEYYSVVRSIRAIEGADVCILMVDATRGIESQDLNIFSLIQKNSKGLVVVVNKWDLVENKTDKVMKTFEEAIRSRFAPFVDFPIVFASALTKQRILKVLEEARKVYENRMIKIPTARLNEEMLPLIEAYPPPATKGKYIKIKYVTQLPNTQVPSFVFFANLPQYVKEPYRRFLENKMREKWDLSGTPINIYIRQK.

EngA-type G domains follow at residues 3 to 167 (NLVA…KKES) and 176 to 352 (PRFA…ENRM). GTP contacts are provided by residues 9–16 (GRPNVGKS), 56–60 (DTGGW), 119–122 (NKTD), 182–189 (GRPNAGKS), 229–233 (DTAGI), and 294–297 (NKWD). The 85-residue stretch at 353–437 (IKIPTARLNE…TPINIYIRQK (85 aa)) folds into the KH-like domain.

The protein belongs to the TRAFAC class TrmE-Era-EngA-EngB-Septin-like GTPase superfamily. EngA (Der) GTPase family. As to quaternary structure, associates with the 50S ribosomal subunit.

In terms of biological role, GTPase that plays an essential role in the late steps of ribosome biogenesis. In Bacteroides fragilis (strain ATCC 25285 / DSM 2151 / CCUG 4856 / JCM 11019 / LMG 10263 / NCTC 9343 / Onslow / VPI 2553 / EN-2), this protein is GTPase Der.